Here is a 558-residue protein sequence, read N- to C-terminus: Potassium-transporting ATPase potassium-binding subunit (558 aa).

The next 11 membrane-spanning stretches (helical) occupy residues M1–H21, W58–G78, F85–V105, G130–V150, L179–F199, P245–P265, T279–F299, G374–G394, I416–V436, A484–A504, and F527–L547.

The protein belongs to the KdpA family. In terms of assembly, the system is composed of three essential subunits: KdpA, KdpB and KdpC.

It is found in the cell membrane. Functionally, part of the high-affinity ATP-driven potassium transport (or Kdp) system, which catalyzes the hydrolysis of ATP coupled with the electrogenic transport of potassium into the cytoplasm. This subunit binds the extracellular potassium ions and delivers the ions to the membrane domain of KdpB through an intramembrane tunnel. The chain is Potassium-transporting ATPase potassium-binding subunit from Clavibacter sepedonicus (Clavibacter michiganensis subsp. sepedonicus).